A 166-amino-acid polypeptide reads, in one-letter code: Putative peptidyl-prolyl cis-trans isomerase dodo (166 aa).

Residues 5-39 (EQLPDGWEKRTSRSTGMSYYLNMYTKESQWDQPTE) form the WW domain. A disordered region spans residues 32 to 53 (SQWDQPTEPAKKAGGGSAGGGD). A compositionally biased stretch (gly residues) spans 44–53 (AGGGSAGGGD). Residues 55-166 (PDEVHCLHLL…SGLHIILRKA (112 aa)) enclose the PpiC domain.

The enzyme catalyses [protein]-peptidylproline (omega=180) = [protein]-peptidylproline (omega=0). The polypeptide is Putative peptidyl-prolyl cis-trans isomerase dodo (dod) (Drosophila melanogaster (Fruit fly)).